We begin with the raw amino-acid sequence, 346 residues long: Phosphoribosylformylglycinamidine cyclo-ligase (346 aa).

It belongs to the AIR synthase family.

It is found in the cytoplasm. It catalyses the reaction 2-formamido-N(1)-(5-O-phospho-beta-D-ribosyl)acetamidine + ATP = 5-amino-1-(5-phospho-beta-D-ribosyl)imidazole + ADP + phosphate + H(+). It functions in the pathway purine metabolism; IMP biosynthesis via de novo pathway; 5-amino-1-(5-phospho-D-ribosyl)imidazole from N(2)-formyl-N(1)-(5-phospho-D-ribosyl)glycinamide: step 2/2. This chain is Phosphoribosylformylglycinamidine cyclo-ligase, found in Bacillus cereus (strain AH187).